We begin with the raw amino-acid sequence, 223 residues long: Ribosomal RNA small subunit methyltransferase G (223 aa).

S-adenosyl-L-methionine-binding positions include Gly82, Leu87, 133–134 (AE), and Arg151.

This sequence belongs to the methyltransferase superfamily. RNA methyltransferase RsmG family.

It is found in the cytoplasm. In terms of biological role, specifically methylates the N7 position of guanine in position 518 of 16S rRNA. The sequence is that of Ribosomal RNA small subunit methyltransferase G from Corynebacterium glutamicum (strain ATCC 13032 / DSM 20300 / JCM 1318 / BCRC 11384 / CCUG 27702 / LMG 3730 / NBRC 12168 / NCIMB 10025 / NRRL B-2784 / 534).